We begin with the raw amino-acid sequence, 351 residues long: Translation initiation factor eIF2B subunit beta (351 aa).

It belongs to the eIF-2B alpha/beta/delta subunits family. As to quaternary structure, component of the translation initiation factor 2B (eIF2B) complex which is a heterodecamer of two sets of five different subunits: alpha, beta, gamma, delta and epsilon. Subunits alpha, beta and delta comprise a regulatory subcomplex and subunits epsilon and gamma comprise a catalytic subcomplex. Within the complex, the hexameric regulatory complex resides at the center, with the two heterodimeric catalytic subcomplexes bound on opposite sides.

It localises to the cytoplasm. It is found in the cytosol. Activated by the chemical integrated stress response (ISR) inhibitor ISRIB which stimulates guanine nucleotide exchange factor activity for both phosphorylated and unphosphorylated eIF2. In terms of biological role, acts as a component of the translation initiation factor 2B (eIF2B) complex, which catalyzes the exchange of GDP for GTP on eukaryotic initiation factor 2 (eIF2) gamma subunit. Its guanine nucleotide exchange factor activity is repressed when bound to eIF2 complex phosphorylated on the alpha subunit, thereby limiting the amount of methionyl-initiator methionine tRNA available to the ribosome and consequently global translation is repressed. This is Translation initiation factor eIF2B subunit beta (EIF2B2) from Oryctolagus cuniculus (Rabbit).